We begin with the raw amino-acid sequence, 353 residues long: Nif-specific regulatory protein (353 aa).

Residues 12 to 240 (IVGESAALKE…LQNCTQRTAT (229 aa)) enclose the Sigma-54 factor interaction domain. ATP is bound by residues 40–47 (GESGTGKE) and 103–112 (AHGGTLLLDE). The segment at residues 325-344 (QAKAARLLGRTPRQVGYSLR) is a DNA-binding region (H-T-H motif).

Interacts with sigma-54.

Required for activation of most nif operons, which are directly involved in nitrogen fixation. This chain is Nif-specific regulatory protein (nifA), found in Rhizobium leguminosarum bv. trifolii.